The sequence spans 634 residues: tRNA uridine 5-carboxymethylaminomethyl modification enzyme MnmG (634 aa).

FAD is bound at residue 14-19 (GGGHAG). 279–293 (GPRYCPSIEDKVVRF) lines the NAD(+) pocket.

It belongs to the MnmG family. As to quaternary structure, homodimer. Heterotetramer of two MnmE and two MnmG subunits. FAD serves as cofactor.

The protein localises to the cytoplasm. Functionally, NAD-binding protein involved in the addition of a carboxymethylaminomethyl (cmnm) group at the wobble position (U34) of certain tRNAs, forming tRNA-cmnm(5)s(2)U34. This is tRNA uridine 5-carboxymethylaminomethyl modification enzyme MnmG from Xanthomonas euvesicatoria pv. vesicatoria (strain 85-10) (Xanthomonas campestris pv. vesicatoria).